We begin with the raw amino-acid sequence, 91 residues long: C-C motif chemokine 5 (91 aa).

The N-terminal stretch at 1–23 is a signal peptide; that stretch reads MKISAAVLTVVLMAASLCAPASA. 2 disulfides stabilise this stretch: cysteine 33/cysteine 57 and cysteine 34/cysteine 73.

Belongs to the intercrine beta (chemokine CC) family.

It localises to the secreted. Functionally, chemoattractant for blood monocytes, memory T-helper cells and eosinophils. Causes the release of histamine from basophils and activates eosinophils. May activate several chemokine receptors including CCR1, CCR3, CCR4 and CCR5. May also be an agonist of the G protein-coupled receptor GPR75. Together with GPR75, may play a role in neuron survival through activation of a downstream signaling pathway involving the PI3, Akt and MAP kinases. By activating GPR75 may also play a role in insulin secretion by islet cells. The sequence is that of C-C motif chemokine 5 (CCL5) from Sigmodon hispidus (Hispid cotton rat).